The following is a 727-amino-acid chain: Tubulin polyglutamylase TTLL11 (727 aa).

Basic and acidic residues predominate over residues 1–12 (MRRSSPEKKPEA). Residues 1–88 (MRRSSPEKKP…ARVVRRLPPA (88 aa)) form a disordered region. The span at 17 to 34 (DAAAAAAATAAATESLPA) shows a compositional bias: low complexity. Basic and acidic residues-rich tracts occupy residues 49 to 63 (DPER…KDVG) and 72 to 81 (HAPEEGEARV). A TTL domain is found at 125–477 (PVTVDSSKAR…EVKVAVIRDT (353 aa)). ATP contacts are provided by residues Lys-246, 252–253 (QG), 279–282 (QEYI), and 292–294 (KFD). A protein is bound at residue Gln-252. Arg-318 lines the L-glutamate pocket. Residue 340 to 341 (TN) participates in ATP binding. L-glutamate contacts are provided by Tyr-342, Ser-343, and Lys-362. 3 residues coordinate Mg(2+): Asp-425, Glu-438, and Asn-440. The interval 464–566 (LVDEEVKVAV…SICLKQVFPK (103 aa)) is c-MTBD region. Position 470 (Lys-470) interacts with L-glutamate. 2 disordered regions span residues 530–551 (KSFT…EPNP) and 694–727 (RPLQ…LSQS).

It belongs to the tubulin--tyrosine ligase family. Mg(2+) serves as cofactor. As to expression, highly expressed in brain, kidney, liver, lung, muscle and testis. Expressed in heart, spleen and trachea. In the brain, expressed in ependymal cilia, cortex, corpus callosum and striatum.

It localises to the cytoplasm. It is found in the cytoskeleton. The protein localises to the cilium basal body. The catalysed reaction is L-glutamyl-[protein] + L-glutamate + ATP = gamma-L-glutamyl-L-glutamyl-[protein] + ADP + phosphate + H(+). It catalyses the reaction (L-glutamyl)(n)-gamma-L-glutamyl-L-glutamyl-[protein] + L-glutamate + ATP = (L-glutamyl)(n+1)-gamma-L-glutamyl-L-glutamyl-[protein] + ADP + phosphate + H(+). Polyglutamylase which modifies tubulin, generating polyglutamate side chains of variable lengths on the gamma-carboxyl group of specific glutamate residues within the C-terminal tail of tubulin. Preferentially mediates ATP-dependent polyglutamate long side-chain elongation over the initiation step of the polyglutamylation reaction. Preferentially modifies the alpha-tubulin tail over a beta-tail. Required for CCSAP localization to both spindle and cilia microtubules. Promotes tubulin polyglutamylation which stimulates spastin/SPAST-mediated microtubule severing, thereby regulating microtubule functions. This is Tubulin polyglutamylase TTLL11 from Mus musculus (Mouse).